The following is a 355-amino-acid chain: Ataxin-3 (355 aa).

Met1 participates in a covalent cross-link: Peptide (Met-Gly) (interchain with G-Cter in ubiquitin). The region spanning 1-180 (MESIFHEKQE…DCEADQLLQM (180 aa)) is the Josephin domain. Catalysis depends on Cys14, which acts as the Nucleophile. The active-site Proton acceptor is the His119. Residue Asn134 is part of the active site. Lys200 participates in a covalent cross-link: Glycyl lysine isopeptide (Lys-Gly) (interchain with G-Cter in ubiquitin). Ser219 carries the post-translational modification Phosphoserine. UIM domains follow at residues 224–243 (EDEDDLQRALAISRQEIDME) and 244–263 (DEEADLRRAIQLSMQGSSRS). Polar residues predominate over residues 257–275 (MQGSSRSMCENSPQTSSPD). The disordered stretch occupies residues 257–355 (MQGSSRSMCE…KDNLKAERKK (99 aa)). Phosphoserine occurs at positions 268, 272, and 273. Basic and acidic residues predominate over residues 279-289 (EELRRRREAYF). Ser321 is subject to Phosphoserine. One can recognise a UIM 3 domain in the interval 329–348 (SEEDMLRAAVTMSLETAKDN). Residues 344 to 355 (TAKDNLKAERKK) are compositionally biased toward basic and acidic residues.

Interacts with STUB1/CHIP (when monoubiquitinated). Interacts with DNA repair proteins RAD23A and RAD23B. Interacts with BECN1 (via its poly-Gln domain). Interacts with PRKN, UBR2, VCP and tubulin. In terms of processing, monoubiquitinated by UBE2W, possibly leading to activate the deubiquitinating enzyme activity.

It localises to the nucleus matrix. It is found in the nucleus. The protein resides in the lysosome membrane. The enzyme catalyses Thiol-dependent hydrolysis of ester, thioester, amide, peptide and isopeptide bonds formed by the C-terminal Gly of ubiquitin (a 76-residue protein attached to proteins as an intracellular targeting signal).. Functionally, deubiquitinating enzyme involved in protein homeostasis maintenance, transcription, cytoskeleton regulation, myogenesis and degradation of misfolded chaperone substrates. Binds long polyubiquitin chains and trims them, while it has weak or no activity against chains of 4 or less ubiquitins. Involved in degradation of misfolded chaperone substrates via its interaction with STUB1/CHIP: recruited to monoubiquitinated STUB1/CHIP, and restricts the length of ubiquitin chain attached to STUB1/CHIP substrates and preventing further chain extension. Interacts with key regulators of transcription and represses transcription: acts as a histone-binding protein that regulates transcription. Acts as a negative regulator of mTORC1 signaling in response to amino acid deprivation by mediating deubiquitination of RHEB, thereby promoting RHEB inactivation by the TSC-TBC complex. Regulates autophagy via the deubiquitination of 'Lys-402' of BECN1 leading to the stabilization of BECN1. In Mus musculus (Mouse), this protein is Ataxin-3 (Atxn3).